Reading from the N-terminus, the 432-residue chain is PC-esterase domain-containing protein 1B (432 aa).

Disordered stretches follow at residues 273-312 (WESSGQVEERQPQDNIGPQFAQSPPYPFPRPPPLLPSPGL) and 407-432 (GPYMPWRERPRRPQKHAPACLESRPQ). Positions 285-294 (QDNIGPQFAQ) are enriched in polar residues. Residues 296–312 (PPYPFPRPPPLLPSPGL) are compositionally biased toward pro residues.

It belongs to the PC-esterase family.

In Rattus norvegicus (Rat), this protein is PC-esterase domain-containing protein 1B (Pced1b).